Consider the following 405-residue polypeptide: Acetylornithine aminotransferase (405 aa).

Pyridoxal 5'-phosphate is bound by residues 107 to 108 (GA) and Phe-140. Arg-143 serves as a coordination point for N(2)-acetyl-L-ornithine. A pyridoxal 5'-phosphate-binding site is contributed by 225-228 (DEVQ). Lys-254 bears the N6-(pyridoxal phosphate)lysine mark. Ser-282 contacts N(2)-acetyl-L-ornithine. Thr-283 contacts pyridoxal 5'-phosphate.

This sequence belongs to the class-III pyridoxal-phosphate-dependent aminotransferase family. ArgD subfamily. As to quaternary structure, homodimer. It depends on pyridoxal 5'-phosphate as a cofactor.

It is found in the cytoplasm. It catalyses the reaction N(2)-acetyl-L-ornithine + 2-oxoglutarate = N-acetyl-L-glutamate 5-semialdehyde + L-glutamate. Its pathway is amino-acid biosynthesis; L-arginine biosynthesis; N(2)-acetyl-L-ornithine from L-glutamate: step 4/4. This Shewanella oneidensis (strain ATCC 700550 / JCM 31522 / CIP 106686 / LMG 19005 / NCIMB 14063 / MR-1) protein is Acetylornithine aminotransferase.